Here is a 176-residue protein sequence, read N- to C-terminus: Translation initiation factor IF-3 (176 aa).

The protein belongs to the IF-3 family. Monomer.

It localises to the cytoplasm. Its function is as follows. IF-3 binds to the 30S ribosomal subunit and shifts the equilibrium between 70S ribosomes and their 50S and 30S subunits in favor of the free subunits, thus enhancing the availability of 30S subunits on which protein synthesis initiation begins. This is Translation initiation factor IF-3 from Nitratidesulfovibrio vulgaris (strain DSM 19637 / Miyazaki F) (Desulfovibrio vulgaris).